Reading from the N-terminus, the 763-residue chain is Phosphoglycerol transferase I (763 aa).

Helical transmembrane passes span 1 to 21, 26 to 46, 77 to 97, and 108 to 128; these read MSELLSFALFLASVLIYAWKA, WWFAATLTVLGLFVVLNITLF, ILPGIGIVLGLTAVFGALGWI, and FGYSLLALLLALGSVDASPAF.

It belongs to the OpgB family.

The protein localises to the cell inner membrane. It catalyses the reaction a phosphatidylglycerol + a membrane-derived-oligosaccharide D-glucose = a 1,2-diacyl-sn-glycerol + a membrane-derived-oligosaccharide 6-(glycerophospho)-D-glucose.. It participates in glycan metabolism; osmoregulated periplasmic glucan (OPG) biosynthesis. Functionally, transfers a phosphoglycerol residue from phosphatidylglycerol to the membrane-bound nascent glucan backbones. The chain is Phosphoglycerol transferase I from Escherichia coli O127:H6 (strain E2348/69 / EPEC).